A 130-amino-acid polypeptide reads, in one-letter code: Large ribosomal subunit protein bL17 (130 aa).

This sequence belongs to the bacterial ribosomal protein bL17 family. Part of the 50S ribosomal subunit. Contacts protein L32.

This Shewanella loihica (strain ATCC BAA-1088 / PV-4) protein is Large ribosomal subunit protein bL17.